Reading from the N-terminus, the 340-residue chain is Methionine import ATP-binding protein MetN 1 (340 aa).

The 241-residue stretch at 2-242 (IRLENVSVDF…PQHAYTKQLV (241 aa)) folds into the ABC transporter domain. 39–46 (GTSGAGKS) is an ATP binding site.

The protein belongs to the ABC transporter superfamily. Methionine importer (TC 3.A.1.24) family. In terms of assembly, the complex is composed of two ATP-binding proteins (MetN), two transmembrane proteins (MetI) and a solute-binding protein (MetQ).

The protein resides in the cell inner membrane. The enzyme catalyses L-methionine(out) + ATP + H2O = L-methionine(in) + ADP + phosphate + H(+). The catalysed reaction is D-methionine(out) + ATP + H2O = D-methionine(in) + ADP + phosphate + H(+). Functionally, part of the ABC transporter complex MetNIQ involved in methionine import. Responsible for energy coupling to the transport system. The chain is Methionine import ATP-binding protein MetN 1 from Pectobacterium atrosepticum (strain SCRI 1043 / ATCC BAA-672) (Erwinia carotovora subsp. atroseptica).